We begin with the raw amino-acid sequence, 125 residues long: Fluoride-specific ion channel FluC (125 aa).

4 helical membrane-spanning segments follow: residues 5–25 (FVFI…LAGF), 33–53 (FFPF…GFLW), 69–89 (FVLV…LETG), and 101–121 (IVNL…GIVL). Residues glycine 76 and threonine 79 each coordinate Na(+).

Belongs to the fluoride channel Fluc/FEX (TC 1.A.43) family.

The protein resides in the cell inner membrane. It carries out the reaction fluoride(in) = fluoride(out). Its activity is regulated as follows. Na(+) is not transported, but it plays an essential structural role and its presence is essential for fluoride channel function. Fluoride-specific ion channel. Important for reducing fluoride concentration in the cell, thus reducing its toxicity. The polypeptide is Fluoride-specific ion channel FluC (Desulforapulum autotrophicum (strain ATCC 43914 / DSM 3382 / VKM B-1955 / HRM2) (Desulfobacterium autotrophicum)).